A 184-amino-acid polypeptide reads, in one-letter code: ATP-dependent protease subunit HslV (184 aa).

Thr12 is an active-site residue. Na(+) is bound by residues Ala166, Cys169, and Thr172.

Belongs to the peptidase T1B family. HslV subfamily. As to quaternary structure, a double ring-shaped homohexamer of HslV is capped on each side by a ring-shaped HslU homohexamer. The assembly of the HslU/HslV complex is dependent on binding of ATP.

It is found in the cytoplasm. The enzyme catalyses ATP-dependent cleavage of peptide bonds with broad specificity.. With respect to regulation, allosterically activated by HslU binding. Functionally, protease subunit of a proteasome-like degradation complex believed to be a general protein degrading machinery. This Brucella melitensis biotype 1 (strain ATCC 23456 / CCUG 17765 / NCTC 10094 / 16M) protein is ATP-dependent protease subunit HslV.